A 239-amino-acid chain; its full sequence is Ribonuclease 3 (239 aa).

Positions 12–137 constitute an RNase III domain; that stretch reads RARLETAIGY…LIAAIYLDGG (126 aa). Glu50 is a binding site for Mg(2+). Asp54 is a catalytic residue. Asp123 and Glu126 together coordinate Mg(2+). Residue Glu126 is part of the active site. The region spanning 162 to 231 is the DRBM domain; that stretch reads DAKTELQEWA…AMRLLEREGV (70 aa).

It belongs to the ribonuclease III family. In terms of assembly, homodimer. Mg(2+) serves as cofactor.

Its subcellular location is the cytoplasm. It carries out the reaction Endonucleolytic cleavage to 5'-phosphomonoester.. In terms of biological role, digests double-stranded RNA. Involved in the processing of primary rRNA transcript to yield the immediate precursors to the large and small rRNAs (23S and 16S). Processes some mRNAs, and tRNAs when they are encoded in the rRNA operon. Processes pre-crRNA and tracrRNA of type II CRISPR loci if present in the organism. In Sinorhizobium fredii (strain NBRC 101917 / NGR234), this protein is Ribonuclease 3.